Consider the following 182-residue polypeptide: UPF0397 protein BCAH820_2657 (182 aa).

5 helical membrane-spanning segments follow: residues 9–29, 40–60, 71–91, 114–134, and 142–162; these read VVAI…GFTI, AILT…IGLI, WGIW…MGFI, ITGL…DIIV, and IVIQ…VLGL.

The protein belongs to the UPF0397 family.

It is found in the cell membrane. The chain is UPF0397 protein BCAH820_2657 from Bacillus cereus (strain AH820).